We begin with the raw amino-acid sequence, 353 residues long: Dihydroorotate dehydrogenase (quinone) (353 aa).

FMN is bound by residues 66–70 (AGFDK) and Thr90. A substrate-binding site is contributed by Lys70. 115–119 (NRMGF) provides a ligand contact to substrate. Residues Asn143 and Asn176 each coordinate FMN. Residue Asn176 participates in substrate binding. Ser179 acts as the Nucleophile in catalysis. Asn181 serves as a coordination point for substrate. FMN contacts are provided by Lys212 and Thr240. Residue 241-242 (NT) participates in substrate binding. FMN is bound by residues Gly264, Gly293, and 314 to 315 (YT).

It belongs to the dihydroorotate dehydrogenase family. Type 2 subfamily. In terms of assembly, monomer. FMN serves as cofactor.

Its subcellular location is the cell membrane. It catalyses the reaction (S)-dihydroorotate + a quinone = orotate + a quinol. It participates in pyrimidine metabolism; UMP biosynthesis via de novo pathway; orotate from (S)-dihydroorotate (quinone route): step 1/1. Its function is as follows. Catalyzes the conversion of dihydroorotate to orotate with quinone as electron acceptor. The sequence is that of Dihydroorotate dehydrogenase (quinone) from Mycolicibacterium vanbaalenii (strain DSM 7251 / JCM 13017 / BCRC 16820 / KCTC 9966 / NRRL B-24157 / PYR-1) (Mycobacterium vanbaalenii).